The following is a 251-amino-acid chain: MIQVLNLGHVDYTTAQQLQTTLVDLRKRGVIQDTLLLLEHSPVITMGRNAKQKNIVASQEILAQRGVELIECDRGGDVTFHGPGQLVGYPIFDLRSLNPKIGVIEYVRRIEEVLIRSCGDLGIPTTRVEGLTGVWTVNEPQAKIAAIGVHISRAVTSHGFALNVTTDLDYFKLIVPCGISDKPVTSMQHELGKSLTLEEVMPVITRNFGFIFKEQVLWLESLNDLLPTPEDLPARAPETLRRLHEDDLHLG.

The region spanning 29–216 is the BPL/LPL catalytic domain; the sequence is GVIQDTLLLL…NFGFIFKEQV (188 aa). Residues 74–81, 146–148, and 159–161 each bind substrate; these read RGGDVTFH, AIG, and GFA. Cys177 serves as the catalytic Acyl-thioester intermediate.

Belongs to the LipB family.

It localises to the cytoplasm. The enzyme catalyses octanoyl-[ACP] + L-lysyl-[protein] = N(6)-octanoyl-L-lysyl-[protein] + holo-[ACP] + H(+). Its pathway is protein modification; protein lipoylation via endogenous pathway; protein N(6)-(lipoyl)lysine from octanoyl-[acyl-carrier-protein]: step 1/2. In terms of biological role, catalyzes the transfer of endogenously produced octanoic acid from octanoyl-acyl-carrier-protein onto the lipoyl domains of lipoate-dependent enzymes. Lipoyl-ACP can also act as a substrate although octanoyl-ACP is likely to be the physiological substrate. The protein is Octanoyltransferase of Koribacter versatilis (strain Ellin345).